A 159-amino-acid chain; its full sequence is MNIQIDMIDHTDTLTEKQETLIRELLHEAARYEKLAEGTYELSLSFVSDEEIQELNRDYRGKDQPTDVISFALNEVGEGEQPVEPEAGTPNLLGDIIVSIPRCQEQAEAYGHSFERELAFLIVHGFLHLLGYDHMSEDEEKKMFMRQEDILTAYGLTRS.

Zn(2+) is bound by residues His-124, His-128, and His-134.

Belongs to the endoribonuclease YbeY family. Requires Zn(2+) as cofactor.

Its subcellular location is the cytoplasm. Single strand-specific metallo-endoribonuclease involved in late-stage 70S ribosome quality control and in maturation of the 3' terminus of the 16S rRNA. This is Endoribonuclease YbeY from Halalkalibacterium halodurans (strain ATCC BAA-125 / DSM 18197 / FERM 7344 / JCM 9153 / C-125) (Bacillus halodurans).